The primary structure comprises 395 residues: Phosphoprotein (395 aa).

The segment covering 143-157 (FSSGPSLTDQASSKD) has biased composition (polar residues). The tract at residues 143 to 183 (FSSGPSLTDQASSKDPNFKRGGEKLTDATKADIGGSGASPG) is disordered. Positions 158–172 (PNFKRGGEKLTDATK) are enriched in basic and acidic residues. Residues 220–283 (ENVKEIIEIL…MTTMKIMDPS (64 aa)) are multimerization.

It belongs to the rubulavirus/avulavirus P protein family. Homotetramer. Interacts (via multimerization domain) with polymerase L; this interaction forms the polymerase L-P complex. Interacts (via N-terminus) with N0 (via Ncore); this interaction allows P to chaperon N0 to avoid N polymerization before encapsidation. Interacts (via C-terminus) with N-RNA template; this interaction positions the polymerase on the template for both transcription and replication.

Functionally, essential cofactor of the RNA polymerase L that plays a central role in the transcription and replication by forming the polymerase complex with RNA polymerase L and recruiting L to the genomic N-RNA template for RNA synthesis. Also plays a central role in the encapsidation of nascent RNA chains by forming the encapsidation complex with the nucleocapsid protein N (N-P complex). Acts as a chaperone for newly synthesized free N protein, so-called N0, allowing encapsidation of nascent RNA chains during replication. The nucleoprotein protein N prevents excessive phosphorylation of P, which leads to down-regulation of viral transcription/ replication. Participates, together with N, in the formation of viral factories (viroplasms), which are large inclusions in the host cytoplasm where replication takes place. This Simian virus 41 (SV41) protein is Phosphoprotein (P/V).